The following is a 78-amino-acid chain: Structural DNA-binding protein p10 (78 aa).

The segment covering 1 to 24 has biased composition (low complexity); that stretch reads MPTKAGTKSTANKKTTKGSSKSGS. The segment at 1–41 is disordered; it reads MPTKAGTKSTANKKTTKGSSKSGSPRGHTGKTHAPPSMHSG.

Belongs to the asfivirus P10 family.

It is found in the virion. Functionally, may play a role in genome packaging through direct interaction with viral DNA. Binds to ssDNA and dsDNA with the same apparent affinity in vitro. In African swine fever virus (isolate Tick/South Africa/Pretoriuskop Pr4/1996) (ASFV), this protein is Structural DNA-binding protein p10.